The primary structure comprises 89 residues: Protein WFDC9 (89 aa).

The signal sequence occupies residues 1 to 23; that stretch reads MKPWILLLVMFISGVVMLLPVLG.

The protein localises to the secreted. In Homo sapiens (Human), this protein is Protein WFDC9 (WFDC9).